The sequence spans 146 residues: Aminoglycoside N(6')-acetyltransferase type 1 (146 aa).

Residues Met-1–Gly-146 enclose the N-acetyltransferase domain. Substrate is bound by residues Trp-22, His-25, Tyr-66, and Glu-79. An acetyl-CoA-binding site is contributed by Ile-81 to Val-83. Asp-115 is a substrate binding site. Asn-120 serves as a coordination point for acetyl-CoA. A substrate-binding site is contributed by Glu-136.

As to quaternary structure, homodimer.

The enzyme catalyses kanamycin B + acetyl-CoA = N(6')-acetylkanamycin B + CoA + H(+). Catalyzes the transfer of an acetyl group from acetyl-CoA to the 6'-amino group of aminoglycoside molecules conferring resistance to antibiotics containing the purpurosamine ring including amikacin, kanamycin, tobramycin and netilmicin. The polypeptide is Aminoglycoside N(6')-acetyltransferase type 1 (Acinetobacter genomosp. 13).